Consider the following 211-residue polypeptide: Heat shock 70 kDa protein 4L (211 aa).

Residue S161 is modified to Phosphoserine.

Belongs to the heat shock protein 70 family. As to quaternary structure, homodimer.

The protein localises to the cytoplasm. The protein resides in the nucleus. Functionally, possesses chaperone activity in vitro where it inhibits aggregation of citrate synthase. The chain is Heat shock 70 kDa protein 4L from Mesocricetus auratus (Golden hamster).